Reading from the N-terminus, the 1054-residue chain is Carbamoyl phosphate synthase large chain (1054 aa).

The tract at residues 1 to 402 is carboxyphosphate synthetic domain; sequence MPRRDDIRSI…SLLKAMASLE (402 aa). Positions 129, 169, 175, 176, 208, 210, 215, 241, 242, 243, 285, and 299 each coordinate ATP. The region spanning 133–328 is the ATP-grasp 1 domain; the sequence is REAMERIGLR…IAKIAARLAV (196 aa). Mg(2+)-binding residues include Q285, E299, and N301. 3 residues coordinate Mn(2+): Q285, E299, and N301. The tract at residues 403 to 531 is oligomerization domain; that stretch reads IETRDIQARL…YYYSTYEQED (129 aa). A carbamoyl phosphate synthetic domain region spans residues 532 to 914; it reads EVERGENPSV…AFAKALAAAG (383 aa). The ATP-grasp 2 domain occupies 658–849; the sequence is GRLLRELGIP…LARLATRVLL (192 aa). ATP contacts are provided by R694, K733, E740, G765, V766, H767, S768, Q808, and E820. Residues Q808, E820, and N822 each coordinate Mg(2+). Mn(2+) is bound by residues Q808, E820, and N822. The MGS-like domain maps to 915 to 1054; that stretch reads QRLPESGRVY…SLQDLYAART (140 aa). The tract at residues 915-1054 is allosteric domain; it reads QRLPESGRVY…SLQDLYAART (140 aa).

This sequence belongs to the CarB family. As to quaternary structure, composed of two chains; the small (or glutamine) chain promotes the hydrolysis of glutamine to ammonia, which is used by the large (or ammonia) chain to synthesize carbamoyl phosphate. Tetramer of heterodimers (alpha,beta)4. Requires Mg(2+) as cofactor. It depends on Mn(2+) as a cofactor.

The enzyme catalyses hydrogencarbonate + L-glutamine + 2 ATP + H2O = carbamoyl phosphate + L-glutamate + 2 ADP + phosphate + 2 H(+). It catalyses the reaction hydrogencarbonate + NH4(+) + 2 ATP = carbamoyl phosphate + 2 ADP + phosphate + 2 H(+). Its pathway is amino-acid biosynthesis; L-arginine biosynthesis; carbamoyl phosphate from bicarbonate: step 1/1. It functions in the pathway pyrimidine metabolism; UMP biosynthesis via de novo pathway; (S)-dihydroorotate from bicarbonate: step 1/3. Large subunit of the glutamine-dependent carbamoyl phosphate synthetase (CPSase). CPSase catalyzes the formation of carbamoyl phosphate from the ammonia moiety of glutamine, carbonate, and phosphate donated by ATP, constituting the first step of 2 biosynthetic pathways, one leading to arginine and/or urea and the other to pyrimidine nucleotides. The large subunit (synthetase) binds the substrates ammonia (free or transferred from glutamine from the small subunit), hydrogencarbonate and ATP and carries out an ATP-coupled ligase reaction, activating hydrogencarbonate by forming carboxy phosphate which reacts with ammonia to form carbamoyl phosphate. The sequence is that of Carbamoyl phosphate synthase large chain from Rubrobacter xylanophilus (strain DSM 9941 / JCM 11954 / NBRC 16129 / PRD-1).